The sequence spans 240 residues: Small ribosomal subunit protein uS2 (240 aa).

It belongs to the universal ribosomal protein uS2 family.

The polypeptide is Small ribosomal subunit protein uS2 (Wigglesworthia glossinidia brevipalpis).